The sequence spans 108 residues: Cyclin-dependent protein kinase inhibitor SMR13 (108 aa).

Functionally, probable cyclin-dependent protein kinase (CDK) inhibitor that functions as a repressor of mitosis in the endoreduplication cell cycle. In Arabidopsis thaliana (Mouse-ear cress), this protein is Cyclin-dependent protein kinase inhibitor SMR13.